The sequence spans 455 residues: Probable hexose phosphate transport protein (455 aa).

The next 5 membrane-spanning stretches (helical) occupy residues I34 to F54, L70 to V90, I113 to W133, V161 to I181, and G185 to I205. A disordered region spans residues P219 to E242. 6 consecutive transmembrane segments (helical) span residues Y257–V277, F302–S322, G331–S351, L363–A383, A394–G414, and G424–W444.

It belongs to the major facilitator superfamily. Organophosphate:Pi antiporter (OPA) (TC 2.A.1.4) family.

It is found in the cell membrane. Functionally, transport protein for sugar phosphate uptake. This Chlamydia pneumoniae (Chlamydophila pneumoniae) protein is Probable hexose phosphate transport protein (uhpC).